The following is a 24-amino-acid chain: Brevinin-1JDc (24 aa).

Cysteines 18 and 24 form a disulfide.

As to expression, expressed by the skin glands.

It localises to the secreted. Has antibacterial activity against E.coli ATCC 25992 (MIC=49 uM), E.coli CIB 84492 (MIC=25 uM), S.aureus ATCC 25923 (MIC=6 uM) and S.aureus CIB 85462 (MIC=3 uM). The protein is Brevinin-1JDc of Odorrana jingdongensis (Jingdong frog).